Here is a 140-residue protein sequence, read N- to C-terminus: Large ribosomal subunit protein uL14x/uL14z/uL14y (140 aa).

This sequence belongs to the universal ribosomal protein uL14 family.

The polypeptide is Large ribosomal subunit protein uL14x/uL14z/uL14y (RPL23A) (Arabidopsis thaliana (Mouse-ear cress)).